Here is a 911-residue protein sequence, read N- to C-terminus: Alpha-actinin-4 (911 aa).

Positions 1-269 (MVDYHAANQA…YVSSFYHAFS (269 aa)) are actin-binding. The interval 12 to 26 (QYGPSSGGNGTGGGG) is interaction with VCL. The tract at residues 12-31 (QYGPSSGGNGTGGGGGMGDY) is disordered. Residues 16–29 (SSGGNGTGGGGGMG) show a composition bias toward gly residues. A Phosphotyrosine modification is found at Tyr31. The interaction with VCL stretch occupies residues 40–61 (RDLLLDPAWEKQQRKTFTAWCN). Calponin-homology (CH) domains follow at residues 50-154 (KQQR…LRFA) and 163-269 (TSAK…HAFS). The short motif at 84-88 (LMLLL) is the LXXLL motif element. The interval 108–126 (KINNVNKALDFIASKGVKL) is interaction with VCL. N6-acetyllysine is present on Lys114. The polyphosphoinositide (PIP2)-binding stretch occupies residues 177 to 192 (TAPYKNVNVQNFHISW). At Lys214 the chain carries N6-acetyllysine. Residue Thr249 is modified to Phosphothreonine. 4 Spectrin repeats span residues 293–403 (HLME…WLLN), 413–518 (HLAE…ALEK), 528–639 (QLHL…ALLE), and 649–752 (HLRR…EVEN). Residues Lys592 and Lys625 each carry the N6-acetyllysine modification. A Phosphoserine modification is found at Ser696. The interval 736–911 (WEQLLTTIAR…STALYGESDL (176 aa)) is mediates interaction with MICALL2. EF-hand domains lie at 765 to 800 (EQMQEFRASFNHFDKDHGGALGPEEFKACLISLGYD) and 806 to 841 (QGDAEFNRIMSVVDPNHSGLVTFQAFIDFMSRETTD). Residue Asp778 participates in Ca(2+) binding. At Lys779 the chain carries N6-acetyllysine. 2 residues coordinate Ca(2+): Asp780 and Glu789. Lys859 is subject to N6-acetyllysine. Ser909 bears the Phosphoserine mark.

The protein belongs to the alpha-actinin family. In terms of assembly, homodimer; antiparallel. Interacts with MAGI1. Interacts with MICALL2 (preferentially in opened conformation); stimulated by RAB13 activation. Identified in a IGF2BP1-dependent mRNP granule complex containing untranslated mRNAs. Component of the CART complex, at least composed of ACTN4, HGS/HRS, MYO5B and TRIM3. Binds TRIM3 at the N-terminus. Interacts with PDLIM2. Identified in a complex with CASK, IQGAP1, MAGI2, NPHS1, SPTAN1 and SPTBN1. Interacts with PPARG and RARA. Binds to VCL; this interaction triggers VCL conformational changes. Interacts with SEPTIN14. Interacts with IGSF8. In terms of tissue distribution, expressed in the foot process layer of podocytes in the kidney glomerulus but not in tubules (at protein level).

The protein resides in the nucleus. It is found in the cytoplasm. It localises to the cell junction. Its subcellular location is the cytoskeleton. The protein localises to the stress fiber. The protein resides in the perinuclear region. In terms of biological role, F-actin cross-linking protein which is thought to anchor actin to a variety of intracellular structures. This is a bundling protein. Probably involved in vesicular trafficking via its association with the CART complex. The CART complex is necessary for efficient transferrin receptor recycling but not for EGFR degradation. Involved in tight junction assembly in epithelial cells probably through interaction with MICALL2. Links MICALL2 to the actin cytoskeleton and recruits it to the tight junctions. May also function as a transcriptional coactivator, stimulating transcription mediated by the nuclear hormone receptors PPARG and RARA. Association with IGSF8 regulates the immune synapse formation and is required for efficient T-cell activation. The sequence is that of Alpha-actinin-4 from Rattus norvegicus (Rat).